The following is a 348-amino-acid chain: Phosphoribosylformylglycinamidine cyclo-ligase (348 aa).

Belongs to the AIR synthase family.

The protein resides in the cytoplasm. It catalyses the reaction 2-formamido-N(1)-(5-O-phospho-beta-D-ribosyl)acetamidine + ATP = 5-amino-1-(5-phospho-beta-D-ribosyl)imidazole + ADP + phosphate + H(+). It functions in the pathway purine metabolism; IMP biosynthesis via de novo pathway; 5-amino-1-(5-phospho-D-ribosyl)imidazole from N(2)-formyl-N(1)-(5-phospho-D-ribosyl)glycinamide: step 2/2. This chain is Phosphoribosylformylglycinamidine cyclo-ligase, found in Roseobacter denitrificans (strain ATCC 33942 / OCh 114) (Erythrobacter sp. (strain OCh 114)).